We begin with the raw amino-acid sequence, 226 residues long: tRNA (guanine-N(7)-)-methyltransferase (226 aa).

E57, E82, D109, and D132 together coordinate S-adenosyl-L-methionine. The active site involves D132. Substrate is bound by residues K136, D168, and 205 to 208 (TKFE).

The protein belongs to the class I-like SAM-binding methyltransferase superfamily. TrmB family.

It carries out the reaction guanosine(46) in tRNA + S-adenosyl-L-methionine = N(7)-methylguanosine(46) in tRNA + S-adenosyl-L-homocysteine. It participates in tRNA modification; N(7)-methylguanine-tRNA biosynthesis. Its function is as follows. Catalyzes the formation of N(7)-methylguanine at position 46 (m7G46) in tRNA. The protein is tRNA (guanine-N(7)-)-methyltransferase of Legionella pneumophila subsp. pneumophila (strain Philadelphia 1 / ATCC 33152 / DSM 7513).